A 368-amino-acid chain; its full sequence is COP9 signalosome complex subunit 5 (368 aa).

The region spanning 56–193 (IKISAIALLK…IGAFRTYPEG (138 aa)) is the MPN domain. Zn(2+)-binding residues include His139, His141, and Asp152. A JAMM motif motif is present at residues 139–152 (HSHPGYGCWLSGID). Residues 347 to 368 (TEPEKAGPSPSAPEPAVEMADA) are disordered.

It belongs to the peptidase M67A family. CSN5 subfamily. Component of the CSN complex, probably composed of csn-1, csn-2, csn-3, csn-4, csn-5, csn-6 and csn-7. Within the complex it probably interacts directly with csn-1. Interacts with glh-1 and glh-3. Interacts with lag-1. Interacts with kgb-1. It depends on a divalent metal cation as a cofactor.

The protein localises to the cytoplasm. It localises to the nucleus. Its function is as follows. Probable protease subunit of the COP9 signalosome complex (CSN), a complex involved in various cellular and developmental processes. The CSN complex is an essential regulator of the ubiquitin (Ubl) conjugation pathway by mediating the deneddylation of the cullin subunits of the SCF-type E3 ligase complexes, leading to decrease the Ubl ligase activity of SCF. In the complex, it probably acts as the catalytic center that mediates the cleavage of Nedd8 from cullins. It however has no metalloprotease activity by itself and requires the other subunits of the CSN complex. The CSN complex plays an essential role in embryogenesis and oogenesis and is required to regulate microtubule stability in the early embryo. Mediates mei-3/katanin targeting for degradation at the meiosis to mitosis transition via deneddylation of cul-3. May stabilize glh-1 protein levels by antagonizing kgb-1. This Caenorhabditis elegans protein is COP9 signalosome complex subunit 5 (csn-5).